The sequence spans 185 residues: Erythropoietin (185 aa).

Residues 1–25 (MLQKTGRGLLAFLLIVLEWTQPSLP) form the signal peptide. 2 disulfide bridges follow: Cys-32/Cys-180 and Cys-54/Cys-58.

The protein belongs to the EPO/TPO family. As to expression, expressed mainly in heart, liver and brain. Isoform 2 is brain specific.

Its subcellular location is the secreted. Functionally, erythropoietin is the principal hormone involved in the regulation of erythrocyte differentiation and the maintenance of a physiological level of circulating erythrocyte mass. This Takifugu rubripes (Japanese pufferfish) protein is Erythropoietin (epo).